The following is a 577-amino-acid chain: Sensor histidine kinase YesM (577 aa).

Over 1–17 (MKKRVAGWYRRMKIKDK) the chain is Cytoplasmic. A helical transmembrane segment spans residues 18-38 (LFVFLSLIMAVSFLFVYSGVQ). Residues 39–286 (YAFHVYDEQI…PFDQMFAKIS (248 aa)) are Extracellular-facing. A helical transmembrane segment spans residues 287-307 (FMKTVIGTCFLLFFCVVLLFG). Over 308-577 (RKIANSITEP…ITIPCRNEVV (270 aa)) the chain is Cytoplasmic. Positions 312–368 (NSITEPIEQLVTAMKSVQHSGIEAGVSLSLPEHTQDEAGMLNRHFTVMMKRINELME) constitute an HAMP domain. The 210-residue stretch at 365 to 574 (ELMEENVEKQ…RIVITIPCRN (210 aa)) folds into the Histidine kinase domain. H392 carries the post-translational modification Phosphohistidine; by autocatalysis.

Its subcellular location is the cell membrane. It catalyses the reaction ATP + protein L-histidine = ADP + protein N-phospho-L-histidine.. Functionally, member of the two-component regulatory system YesM/YesN. Probably activates YesN by phosphorylation. This is Sensor histidine kinase YesM (yesM) from Bacillus subtilis (strain 168).